We begin with the raw amino-acid sequence, 168 residues long: Cell division inhibitor SulA (168 aa).

Positions 106-112 (ALLTGNY) are ftsZ binding. The lon protease binding stretch occupies residues 161-168 (KIHSYLYH).

The protein belongs to the SulA family. Interacts with FtsZ. Is rapidly cleaved and degraded by the Lon protease once DNA damage is repaired.

In terms of biological role, component of the SOS system and an inhibitor of cell division. Accumulation of SulA causes rapid cessation of cell division and the appearance of long, non-septate filaments. In the presence of GTP, binds a polymerization-competent form of FtsZ in a 1:1 ratio, thus inhibiting FtsZ polymerization and therefore preventing it from participating in the assembly of the Z ring. This mechanism prevents the premature segregation of damaged DNA to daughter cells during cell division. The chain is Cell division inhibitor SulA from Yersinia pseudotuberculosis serotype O:1b (strain IP 31758).